The primary structure comprises 271 residues: Elongation factor Ts (271 aa).

The involved in Mg(2+) ion dislocation from EF-Tu stretch occupies residues 76–79 (TDFV).

The protein belongs to the EF-Ts family.

It localises to the cytoplasm. Its function is as follows. Associates with the EF-Tu.GDP complex and induces the exchange of GDP to GTP. It remains bound to the aminoacyl-tRNA.EF-Tu.GTP complex up to the GTP hydrolysis stage on the ribosome. The polypeptide is Elongation factor Ts (Mycolicibacterium gilvum (strain PYR-GCK) (Mycobacterium gilvum (strain PYR-GCK))).